Consider the following 185-residue polypeptide: Ribosome-recycling factor (185 aa).

This sequence belongs to the RRF family.

Its subcellular location is the cytoplasm. In terms of biological role, responsible for the release of ribosomes from messenger RNA at the termination of protein biosynthesis. May increase the efficiency of translation by recycling ribosomes from one round of translation to another. This chain is Ribosome-recycling factor, found in Syntrophus aciditrophicus (strain SB).